Here is a 146-residue protein sequence, read N- to C-terminus: Protein US8.5 (146 aa).

Residues 63–93 (LIAIADARGDPPETLPPGAGGAAPACRRPPR) form a disordered region. Positions 84–93 (AAPACRRPPR) are enriched in low complexity.

Belongs to the HHV-1 US8.5 protein family. Phosphorylated.

The protein resides in the host nucleus. Its subcellular location is the host nucleolus. In Human herpesvirus 2 (strain HG52) (HHV-2), this protein is Protein US8.5.